The primary structure comprises 355 residues: MIGKLKQNLLVACLVISSVTVFYLCRHAMDCHHRIEERSQPLLSSLHATLRTGQNLSTPFIYNKDMPLIFIGGVPRSGTTLMRAMLDAHPDVRCGEETRVIPRILAMKQMWSRSGREKMRLDEAGVTDEVLDSAMQAFLLEIIVKHGEPANYLCNKDPFALKSLTYLAKIFPHAKFILMVRDGRASVHSMISRKVTIAGFDLSSYRDCLTKWNRAIETMYTQCLEAADKCLPVHYEQLVLHPEKWMRTLLRFLNIPWNDAVLHHEELIGKAGGVSLSKVERSTDQVIKPVNVEALSKWVGKIPLDVQRDMAVIAPMLARLGYDPHANPPNYGRPDPLVLDNTRRLQKSPEKPNPS.

The Cytoplasmic segment spans residues 1 to 8 (MIGKLKQN). The helical; Signal-anchor for type II membrane protein transmembrane segment at 9–25 (LLVACLVISSVTVFYLC) threads the bilayer. Over 26-355 (RHAMDCHHRI…QKSPEKPNPS (330 aa)) the chain is Lumenal. Asparagine 55 is a glycosylation site (N-linked (GlcNAc...) asparagine). 3'-phosphoadenylyl sulfate is bound at residue 76–80 (RSGTT). Cysteine 94 and cysteine 154 are joined by a disulfide. The Proton donor/acceptor role is filled by glutamate 97. Residues 99 to 103 (RVIPR) are interaction with peptide substrate. Residues arginine 181, serine 189, and arginine 193 each coordinate 3'-phosphoadenylyl sulfate. An intrachain disulfide couples cysteine 223 to cysteine 230. 3'-phosphoadenylyl sulfate-binding positions include tyrosine 235, 282–291 (STDQVIKPVN), and lysine 297. A disordered region spans residues 325 to 355 (HANPPNYGRPDPLVLDNTRRLQKSPEKPNPS). Residues 341–355 (NTRRLQKSPEKPNPS) show a composition bias toward basic and acidic residues.

This sequence belongs to the protein sulfotransferase family.

The protein resides in the golgi apparatus membrane. It catalyses the reaction L-tyrosyl-[protein] + 3'-phosphoadenylyl sulfate = O-sulfo-L-tyrosine-[protein] + adenosine 3',5'-bisphosphate + H(+). Functionally, catalyzes the O-sulfation of tyrosine residues within acidic motifs of polypeptides, using 3'-phosphoadenylyl sulfate (PAPS) as cosubstrate. This Danio rerio (Zebrafish) protein is Protein-tyrosine sulfotransferase 1 (tpst1).